We begin with the raw amino-acid sequence, 569 residues long: Anti-Muellerian hormone type-2 receptor (569 aa).

The first 17 residues, 1–17 (MLGTLGLWALLPAAVQA), serve as a signal peptide directing secretion. The Extracellular portion of the chain corresponds to 18–148 (PPNRRTCVFF…AAPGESPWMA (131 aa)). Disulfide bonds link Cys55–Cys79 and Cys92–Cys109. Asn66 carries an N-linked (GlcNAc...) asparagine glycan. A glycan (N-linked (GlcNAc...) asparagine) is linked at Asn119. Residues 149-169 (LALLGLVLLLLLLLGGIVVAL) form a helical membrane-spanning segment. Over 170 to 569 (LQRKAYRVQS…PGAACASSDV (400 aa)) the chain is Cytoplasmic. Residues 201–511 (LCFSQVIREG…RLVALVHPQE (311 aa)) form the Protein kinase domain. Residues 207-215 (IREGGHAAV) and Lys228 contribute to the ATP site. Asp331 serves as the catalytic Proton acceptor. The tract at residues 512–535 (AQPCPEGRPHSHPEDWPPAPAPAP) is disordered.

This sequence belongs to the protein kinase superfamily. TKL Ser/Thr protein kinase family. TGFB receptor subfamily. In terms of assembly, interacts with type I receptor ACVR1. It depends on Mg(2+) as a cofactor. Mn(2+) serves as cofactor.

It is found in the membrane. It catalyses the reaction L-threonyl-[receptor-protein] + ATP = O-phospho-L-threonyl-[receptor-protein] + ADP + H(+). It carries out the reaction L-seryl-[receptor-protein] + ATP = O-phospho-L-seryl-[receptor-protein] + ADP + H(+). Its function is as follows. On ligand binding, forms a receptor complex consisting of two type II and two type I transmembrane serine/threonine kinases. Type II receptors phosphorylate and activate type I receptors which autophosphorylate, then bind and activate SMAD transcriptional regulators. Receptor for anti-Muellerian hormone. The sequence is that of Anti-Muellerian hormone type-2 receptor (AMHR2) from Oryctolagus cuniculus (Rabbit).